We begin with the raw amino-acid sequence, 210 residues long: Synaptosomal-associated protein 23 (210 aa).

Met-1 bears the N-acetylmethionine mark. Ser-5, Ser-20, Ser-23, and Ser-34 each carry phosphoserine. The region spanning 14–76 (HQVTDESLES…REAEKTLTEL (63 aa)) is the t-SNARE coiled-coil homology 1 domain. Positions 23 to 76 (STRRILGLAIESQDAGIKTITMLDEQGEQLNRIEEGMDQINKDMREAEKTLTEL) form a coiled coil. Residues Cys-79, Cys-80, Cys-83, Cys-85, and Cys-87 are each lipidated (S-palmitoyl cysteine). Residues 104-136 (GDGGDSSPSNVVSKQPSRITNGQPQQTTGAASG) are disordered. Residues 109–133 (SSPSNVVSKQPSRITNGQPQQTTGA) show a composition bias toward polar residues. Phosphoserine is present on residues Ser-110 and Ser-160. In terms of domain architecture, t-SNARE coiled-coil homology 2 spans 145-207 (DAREDEMEEN…DIANTRAKKL (63 aa)).

The protein belongs to the SNAP-25 family. Homotetramer (via coiled-coil domain), also forms heterotetramers with STX4 and VAMP3. Found in a complex with VAMP8 and STX1A. Found in a complex with VAMP8 and STX4 in pancreas. Interacts simultaneously with SNAPIN and SYN4. Interacts with STX1A. Interacts with STX12. Interacts tightly to multiple syntaxins and synaptobrevins/VAMPs. Interacts with ZDHHC13 (via ANK repeats). Interacts with ZDHHC17 (via ANK repeats).

The protein resides in the cell membrane. Its subcellular location is the synapse. The protein localises to the synaptosome. It is found in the cytoplasmic vesicle membrane. Functionally, essential component of the high affinity receptor for the general membrane fusion machinery and an important regulator of transport vesicle docking and fusion. The polypeptide is Synaptosomal-associated protein 23 (Snap23) (Rattus norvegicus (Rat)).